A 342-amino-acid polypeptide reads, in one-letter code: Phenylalanine--tRNA ligase alpha subunit (342 aa).

E255 provides a ligand contact to Mg(2+).

This sequence belongs to the class-II aminoacyl-tRNA synthetase family. Phe-tRNA synthetase alpha subunit type 1 subfamily. In terms of assembly, tetramer of two alpha and two beta subunits. Mg(2+) is required as a cofactor.

The protein resides in the cytoplasm. The catalysed reaction is tRNA(Phe) + L-phenylalanine + ATP = L-phenylalanyl-tRNA(Phe) + AMP + diphosphate + H(+). The protein is Phenylalanine--tRNA ligase alpha subunit of Pelodictyon phaeoclathratiforme (strain DSM 5477 / BU-1).